The chain runs to 431 residues: Glucose-1-phosphate adenylyltransferase (431 aa).

Lys39 lines the beta-D-fructose 1,6-bisphosphate pocket. AMP-binding residues include Arg40, His46, and Arg52. Alpha-D-glucose 1-phosphate-binding positions include Tyr114, Gly179, 194–195 (EK), and Ser212. Glu370 and Arg386 together coordinate AMP. Beta-D-fructose 1,6-bisphosphate-binding positions include 419–423 (REMLR) and 429–431 (QER).

This sequence belongs to the bacterial/plant glucose-1-phosphate adenylyltransferase family. In terms of assembly, homotetramer.

The catalysed reaction is alpha-D-glucose 1-phosphate + ATP + H(+) = ADP-alpha-D-glucose + diphosphate. It participates in glycan biosynthesis; glycogen biosynthesis. Its activity is regulated as follows. Allosterically activated by fructose-1,6-bisphosphate (F16BP) and inhibited by AMP. Its function is as follows. Involved in the biosynthesis of ADP-glucose, a building block required for the elongation reactions to produce glycogen. Catalyzes the reaction between ATP and alpha-D-glucose 1-phosphate (G1P) to produce pyrophosphate and ADP-Glc. In Salmonella typhi, this protein is Glucose-1-phosphate adenylyltransferase.